A 1012-amino-acid polypeptide reads, in one-letter code: Isoleucine--tRNA ligase, mitochondrial (1012 aa).

The transit peptide at 1–48 (MHWGLCPRGPGAAAVAAAGSFWGPARLPSRLGCLGMTRRLVVRSVAGA) directs the protein to the mitochondrion. Position 56 is an N6-succinyllysine (Lys-56). N6-acetyllysine; alternate is present on Lys-74. Position 74 is an N6-succinyllysine; alternate (Lys-74). The 'HIGH' region signature appears at 116-126 (PYANGDPHVGH). Lys-194 bears the N6-succinyllysine mark. At Lys-233 the chain carries N6-acetyllysine. Lys-241 is subject to N6-acetyllysine; alternate. At Lys-241 the chain carries N6-succinyllysine; alternate. N6-succinyllysine is present on residues Lys-479 and Lys-500. ATP-binding residues include Lys-664 and Lys-667. The 'KMSKS' region signature appears at 664-668 (KMSKS). Lys-725 carries the N6-acetyllysine modification. An N6-acetyllysine; alternate mark is found at Lys-775 and Lys-781. N6-succinyllysine; alternate occurs at positions 775 and 781.

The protein belongs to the class-I aminoacyl-tRNA synthetase family.

The protein localises to the mitochondrion matrix. The enzyme catalyses tRNA(Ile) + L-isoleucine + ATP = L-isoleucyl-tRNA(Ile) + AMP + diphosphate. Aminoacyl-tRNA synthetase that catalyzes the specific attachment of isoleucine to its cognate tRNA (tRNA(Ile)). The chain is Isoleucine--tRNA ligase, mitochondrial from Mus musculus (Mouse).